A 469-amino-acid polypeptide reads, in one-letter code: ATP synthase subunit beta (469 aa).

155-162 (GGAGCGKT) provides a ligand contact to ATP.

This sequence belongs to the ATPase alpha/beta chains family. In terms of assembly, F-type ATPases have 2 components, CF(1) - the catalytic core - and CF(0) - the membrane proton channel. CF(1) has five subunits: alpha(3), beta(3), gamma(1), delta(1), epsilon(1). CF(0) has three main subunits: a(1), b(2) and c(9-12). The alpha and beta chains form an alternating ring which encloses part of the gamma chain. CF(1) is attached to CF(0) by a central stalk formed by the gamma and epsilon chains, while a peripheral stalk is formed by the delta and b chains.

Its subcellular location is the cell inner membrane. It catalyses the reaction ATP + H2O + 4 H(+)(in) = ADP + phosphate + 5 H(+)(out). In terms of biological role, produces ATP from ADP in the presence of a proton gradient across the membrane. The catalytic sites are hosted primarily by the beta subunits. This chain is ATP synthase subunit beta, found in Syntrophus aciditrophicus (strain SB).